We begin with the raw amino-acid sequence, 334 residues long: Phosphatidylglycerol--prolipoprotein diacylglyceryl transferase (334 aa).

Helical transmembrane passes span 22-42 (FLPFRIQTYALIILTGIVVAA), 54-74 (AEPGVVLDVLLWAVPLGIIGA), 105-125 (IWEGGNAIFGALIGGAVGVGI), and 131-151 (GLRFWTFADALAPALLLAQAI). R153 is an a 1,2-diacyl-sn-glycero-3-phospho-(1'-sn-glycerol) binding site. 2 consecutive transmembrane segments (helical) span residues 191–211 (LFQPLFLYEIVWNVIGVFVIL) and 251–271 (FLGIPSNVWAAFAAVVLGAII). Positions 296 to 334 (PQAEVESGETDPEEILHADDDEERTGTHKPQATSLSGSN) are disordered. Positions 301–318 (ESGETDPEEILHADDDEE) are enriched in acidic residues. The segment covering 323 to 334 (HKPQATSLSGSN) has biased composition (polar residues).

Belongs to the Lgt family.

The protein resides in the cell membrane. The catalysed reaction is L-cysteinyl-[prolipoprotein] + a 1,2-diacyl-sn-glycero-3-phospho-(1'-sn-glycerol) = an S-1,2-diacyl-sn-glyceryl-L-cysteinyl-[prolipoprotein] + sn-glycerol 1-phosphate + H(+). It functions in the pathway protein modification; lipoprotein biosynthesis (diacylglyceryl transfer). In terms of biological role, catalyzes the transfer of the diacylglyceryl group from phosphatidylglycerol to the sulfhydryl group of the N-terminal cysteine of a prolipoprotein, the first step in the formation of mature lipoproteins. This is Phosphatidylglycerol--prolipoprotein diacylglyceryl transferase from Leifsonia xyli subsp. xyli (strain CTCB07).